A 188-amino-acid polypeptide reads, in one-letter code: NADH-quinone oxidoreductase subunit I (188 aa).

4Fe-4S ferredoxin-type domains follow at residues 44–74 (LNRY…VEGA) and 90–119 (RVYQ…MTNE). [4Fe-4S] cluster-binding residues include Cys-54, Cys-57, Cys-60, Cys-64, Cys-99, Cys-102, Cys-105, and Cys-109. Residues 144-188 (GMVDSPHPMAPGTTAEDYYRGTVTGGAAPASQDEPEADDTAGDRP) form a disordered region. Residues 176–188 (DEPEADDTAGDRP) show a composition bias toward acidic residues.

Belongs to the complex I 23 kDa subunit family. As to quaternary structure, NDH-1 is composed of 14 different subunits. Subunits NuoA, H, J, K, L, M, N constitute the membrane sector of the complex. It depends on [4Fe-4S] cluster as a cofactor.

The protein resides in the cell membrane. It catalyses the reaction a quinone + NADH + 5 H(+)(in) = a quinol + NAD(+) + 4 H(+)(out). NDH-1 shuttles electrons from NADH, via FMN and iron-sulfur (Fe-S) centers, to quinones in the respiratory chain. The immediate electron acceptor for the enzyme in this species is believed to be ubiquinone. Couples the redox reaction to proton translocation (for every two electrons transferred, four hydrogen ions are translocated across the cytoplasmic membrane), and thus conserves the redox energy in a proton gradient. This chain is NADH-quinone oxidoreductase subunit I, found in Rhodococcus opacus (strain B4).